The chain runs to 732 residues: Coagulation factor XIII A chain (732 aa).

A disordered region spans residues 1–26 (MSDTPASTFGGRRAVPPNNSNAAEVD). N-acetylserine is present on Ser-2. The propeptide at 2–38 (SDTPASTFGGRRAVPPNNSNAAEVDLPTEELQGLVPR) is activation peptide. Catalysis depends on residues Cys-315, His-374, and Asp-397. 4 residues coordinate Ca(2+): Asn-437, Asp-439, Glu-486, and Glu-491. A glycan (N-linked (GlcNAc...) asparagine) is linked at Asn-614.

It belongs to the transglutaminase superfamily. Transglutaminase family. In terms of assembly, tetramer of two A chains (F13A1) and two B (F13B) chains. Requires Ca(2+) as cofactor. The activation peptide is released by thrombin.

It is found in the cytoplasm. It localises to the secreted. The enzyme catalyses L-glutaminyl-[protein] + L-lysyl-[protein] = [protein]-L-lysyl-N(6)-5-L-glutamyl-[protein] + NH4(+). In terms of biological role, factor XIII is activated by thrombin and calcium ion to a transglutaminase that catalyzes the formation of gamma-glutamyl-epsilon-lysine cross-links between fibrin chains, thus stabilizing the fibrin clot. Also cross-link alpha-2-plasmin inhibitor, or fibronectin, to the alpha chains of fibrin. This is Coagulation factor XIII A chain (F13a1) from Mus musculus (Mouse).